A 240-amino-acid polypeptide reads, in one-letter code: tRNA (guanine-N(1)-)-methyltransferase (240 aa).

S-adenosyl-L-methionine-binding positions include Gly111 and 130-135 (IGDYVI).

The protein belongs to the RNA methyltransferase TrmD family. Homodimer.

The protein resides in the cytoplasm. The enzyme catalyses guanosine(37) in tRNA + S-adenosyl-L-methionine = N(1)-methylguanosine(37) in tRNA + S-adenosyl-L-homocysteine + H(+). In terms of biological role, specifically methylates guanosine-37 in various tRNAs. This chain is tRNA (guanine-N(1)-)-methyltransferase, found in Mycoplasma capricolum subsp. capricolum (strain California kid / ATCC 27343 / NCTC 10154).